Here is a 433-residue protein sequence, read N- to C-terminus: Keratin, type I cytoskeletal 17 (433 aa).

Positions 1–24 (MTTTIRQFTSSSSIKGSSGLGGGS) are disordered. A head region spans residues 1–83 (MTTTIRQFTS…GGVDGLLAGG (83 aa)). Ser-12 and Ser-13 each carry phosphoserine. Lys-15 participates in a covalent cross-link: Glycyl lysine isopeptide (Lys-Gly) (interchain with G-Cter in SUMO1); alternate. Lys-15 is covalently cross-linked (Glycyl lysine isopeptide (Lys-Gly) (interchain with G-Cter in SUMO2); alternate). Phosphoserine occurs at positions 25, 32, 34, and 39. A Phosphoserine; by RPS6KA1 modification is found at Ser-44. The segment at 84–120 (EKATMQNLNDRLASYLDKVRALEEANTELEVKIRDWY) is coil 1A. Residues 84–395 (EKATMQNLND…RLLEGEDAHL (312 aa)) form the IF rod domain. Thr-110 carries the post-translational modification Phosphothreonine. The segment at 121–138 (QKQAPGPARDYSAYYQTI) is linker 1. The tract at residues 139–230 (EDLKNKILVA…NHEEEMNALR (92 aa)) is coil 1B. A linker 12 region spans residues 231-250 (GQVGGEINVEMDAAPGVDLS). The coil 2 stretch occupies residues 251–392 (RILSEMRDQY…TYRRLLEGED (142 aa)). Residue Lys-278 forms a Glycyl lysine isopeptide (Lys-Gly) (interchain with G-Cter in SUMO2) linkage. A Phosphothreonine modification is found at Thr-279. A Phosphoserine modification is found at Ser-323. Residues 393–433 (AHLTQYKPKEPVTTRQVRTIVEEVQDGKVISSREQVHQTTR) are tail. Residues Lys-399, Lys-401, and Lys-420 each participate in a glycyl lysine isopeptide (Lys-Gly) (interchain with G-Cter in SUMO1); alternate cross-link. Glycyl lysine isopeptide (Lys-Gly) (interchain with G-Cter in SUMO2); alternate cross-links involve residues Lys-399, Lys-401, and Lys-420.

This sequence belongs to the intermediate filament family. In terms of assembly, heterodimer of a type I and a type II keratin. KRT17 associates with KRT6 isomers (KRT6A or KRT6B). Interacts with TRADD and SFN. In terms of processing, phosphorylation at Ser-44 occurs in a growth- and stress-dependent fashion in skin keratinocytes, it has no effect on filament organization.

It localises to the cytoplasm. Its function is as follows. Type I keratin involved in the formation and maintenance of various skin appendages, specifically in determining shape and orientation of hair. Required for the correct growth of hair follicles, in particular for the persistence of the anagen (growth) state. Modulates the function of TNF-alpha in the specific context of hair cycling. Regulates protein synthesis and epithelial cell growth through binding to the adapter protein SFN and by stimulating Akt/mTOR pathway. Involved in tissue repair. May be a marker of basal cell differentiation in complex epithelia and therefore indicative of a certain type of epithelial 'stem cells'. Acts as a promoter of epithelial proliferation by acting a regulator of immune response in skin: promotes Th1/Th17-dominated immune environment contributing to the development of basaloid skin tumors. May act as an autoantigen in the immunopathogenesis of psoriasis, with certain peptide regions being a major target for autoreactive T-cells and hence causing their proliferation. This Rattus norvegicus (Rat) protein is Keratin, type I cytoskeletal 17.